Here is a 213-residue protein sequence, read N- to C-terminus: Probable GTP-binding protein EngB (213 aa).

Residues 30 to 204 (SVQSIAFMGR…REFILETLGI (175 aa)) form the EngB-type G domain. Residues 38–45 (GRSNSGKS), 65–69 (GKTKL), 83–86 (DLPG), 150–153 (TKID), and 183–185 (ISA) each bind GTP. 2 residues coordinate Mg(2+): Ser45 and Thr67.

It belongs to the TRAFAC class TrmE-Era-EngA-EngB-Septin-like GTPase superfamily. EngB GTPase family. It depends on Mg(2+) as a cofactor.

Functionally, necessary for normal cell division and for the maintenance of normal septation. The chain is Probable GTP-binding protein EngB from Leptospira biflexa serovar Patoc (strain Patoc 1 / Ames).